Here is a 408-residue protein sequence, read N- to C-terminus: Chaperone protein dnaJ 1, mitochondrial (408 aa).

The transit peptide at 1–26 (MRRFNWVLRHVQARRTFDSAIGLRQG) directs the protein to the mitochondrion. Residues 48–113 (NYYDVLGVSP…ERREEYDKLQ (66 aa)) enclose the J domain. The CR-type zinc-finger motif lies at 173–247 (GCTKRLSFDA…CRGSGIVEGT (75 aa)). The Zn(2+) site is built by Cys186, Cys189, Cys203, Cys206, Cys221, Cys224, Cys235, and Cys238. CXXCXGXG motif repeat units lie at residues 186–193 (CDSCDGLG), 203–210 (CPTCRGVG), 221–228 (CQTCKGTG), and 235–242 (CMSCRGSG).

It belongs to the DnaJ family. B/II subfamily. As to quaternary structure, homodimer. Zn(2+) serves as cofactor. As to expression, ubiquitous.

The protein resides in the mitochondrion. Functionally, plays a continuous role in plant development probably in the structural organization of compartments. This chain is Chaperone protein dnaJ 1, mitochondrial (ATJ1), found in Arabidopsis thaliana (Mouse-ear cress).